Consider the following 235-residue polypeptide: Calcium-activated potassium channel subunit beta-2 (235 aa).

Positions 1-45 are ball and chain; it reads MFIWTSGRTSSSYRQDEKRNIYQKIRDHDLLDKRKTVTALKAGED. Topologically, residues 1–46 are cytoplasmic; that stretch reads MFIWTSGRTSSSYRQDEKRNIYQKIRDHDLLDKRKTVTALKAGEDR. The helical transmembrane segment at 47–67 threads the bilayer; it reads AILLGLAMMVCSIMMYFLLGI. Topologically, residues 68 to 194 are extracellular; sequence TLLRSYMQSV…VILTKLYSSN (127 aa). Residues N88, N96, and N119 are each glycosylated (N-linked (GlcNAc...) asparagine). The helical transmembrane segment at 195–215 threads the bilayer; that stretch reads VLFHSLFWPTCMMAGGVAIVA. Residues 216 to 235 lie on the Cytoplasmic side of the membrane; that stretch reads MVKLTQYLSLLCERIQRINR.

Belongs to the KCNMB (TC 8.A.14.1) family. KCNMB2 subfamily. As to quaternary structure, interacts with KCNMA1 tetramer. There are probably 4 molecules of KCMNB2 per KCNMA1 tetramer. In terms of processing, N-glycosylated.

The protein resides in the membrane. Functionally, regulatory subunit of the calcium activated potassium KCNMA1 (maxiK) channel. Modulates the calcium sensitivity and gating kinetics of KCNMA1, thereby contributing to KCNMA1 channel diversity. Acts as a negative regulator that confers rapid and complete inactivation of KCNMA1 channel complex. The polypeptide is Calcium-activated potassium channel subunit beta-2 (Kcnmb2) (Mus musculus (Mouse)).